Here is a 417-residue protein sequence, read N- to C-terminus: Putative nickel insertion protein (417 aa).

Residues His69–Arg99 form a disordered region. Over residues Asp74–Arg99 the composition is skewed to basic residues.

It belongs to the LarC family.

The protein is Putative nickel insertion protein of Maridesulfovibrio salexigens (strain ATCC 14822 / DSM 2638 / NCIMB 8403 / VKM B-1763) (Desulfovibrio salexigens).